The chain runs to 784 residues: Lon protease (784 aa).

Positions 11 to 204 (IPVLPLRDVV…YLMAMMESEI (194 aa)) constitute a Lon N-terminal domain. 356-363 (GPPGVGKT) lines the ATP pocket. Positions 592–773 (ENRVGQVTGL…EEVLALALQN (182 aa)) constitute a Lon proteolytic domain. Catalysis depends on residues S679 and K722.

It belongs to the peptidase S16 family. As to quaternary structure, homohexamer. Organized in a ring with a central cavity.

It is found in the cytoplasm. The catalysed reaction is Hydrolysis of proteins in presence of ATP.. ATP-dependent serine protease that mediates the selective degradation of mutant and abnormal proteins as well as certain short-lived regulatory proteins. Required for cellular homeostasis and for survival from DNA damage and developmental changes induced by stress. Degrades polypeptides processively to yield small peptide fragments that are 5 to 10 amino acids long. Binds to DNA in a double-stranded, site-specific manner. This chain is Lon protease, found in Erwinia amylovora (Fire blight bacteria).